Reading from the N-terminus, the 365-residue chain is 3-dehydroquinate synthase (365 aa).

Residues Gly-106–Asp-110, Thr-130–Thr-131, Lys-142, Lys-151, and Phe-169–Thr-172 each bind NAD(+). Residues Glu-184, His-247, and His-264 each contribute to the Zn(2+) site.

This sequence belongs to the sugar phosphate cyclases superfamily. Dehydroquinate synthase family. It depends on NAD(+) as a cofactor. The cofactor is Co(2+). Requires Zn(2+) as cofactor.

It is found in the cytoplasm. It carries out the reaction 7-phospho-2-dehydro-3-deoxy-D-arabino-heptonate = 3-dehydroquinate + phosphate. Its pathway is metabolic intermediate biosynthesis; chorismate biosynthesis; chorismate from D-erythrose 4-phosphate and phosphoenolpyruvate: step 2/7. In terms of biological role, catalyzes the conversion of 3-deoxy-D-arabino-heptulosonate 7-phosphate (DAHP) to dehydroquinate (DHQ). The polypeptide is 3-dehydroquinate synthase (Listeria monocytogenes serovar 1/2a (strain ATCC BAA-679 / EGD-e)).